A 2000-amino-acid chain; its full sequence is E3 ubiquitin-protein ligase TTC3 (2000 aa).

The segment at 20–249 (MDDFAEGGLS…RHSCMQCVKQ (230 aa)) is interaction with POLG. TPR repeat units lie at residues 250–283 (GELM…RPEN) and 284–317 (HLLY…KNTW). Position 397 is a phosphoserine (S397). The tract at residues 442 to 478 (CDCHPEFLPPPSQPPRHKGKQKSRNNESEKPSSNSQV) is disordered. TPR repeat units follow at residues 556–592 (VLVV…YPNE) and 596–629 (CLAY…ICRL). Residues 804–828 (AQERMEEDLRESNPPKPEEPEETVE) are disordered. S1029 carries the post-translational modification Phosphoserine. 5 disordered regions span residues 1041–1087 (NKGK…GPFA), 1233–1308 (FQPD…PEDA), 1423–1448 (QSST…SSDS), 1806–1839 (LEVK…QSQK), and 1894–1947 (EEQK…VPAP). A compositionally biased stretch (polar residues) spans 1059-1070 (GTASVTPSSETV). Position 1080 is a phosphoserine (S1080). Over residues 1268–1277 (DSDSSSGSAS) the composition is skewed to low complexity. The segment covering 1829–1839 (GQATRSSQSQK) has biased composition (polar residues). Positions 1894-1911 (EEQKKKKPNPGKDKKTSE) are enriched in basic and acidic residues. The span at 1912 to 1934 (AHPAASVSKSSPSPPLAAAGPSA) shows a compositional bias: low complexity. An RING-type; atypical zinc finger spans residues 1952 to 1991 (CQICHEIFKSKNMRVLKCGHKFHKGCFKQWLKGQSTCPTC).

Interacts (when phosphorylated on Ser-397) with AKT1, AKT2 and AKT3 (when phosphorylated). Interacts with CIT. Interacts with POLG. Interacts with HSP70. Interacts with SMURF2. In terms of processing, phosphorylation on Ser-397 by Akt is required for ubiquitin ligase activity. Proteolytically cleaved into differently sized N- and C-terminal fragments.

Its subcellular location is the nucleus. The protein localises to the cytoplasm. It is found in the golgi apparatus. It carries out the reaction S-ubiquitinyl-[E2 ubiquitin-conjugating enzyme]-L-cysteine + [acceptor protein]-L-lysine = [E2 ubiquitin-conjugating enzyme]-L-cysteine + N(6)-ubiquitinyl-[acceptor protein]-L-lysine.. The protein operates within protein modification; protein ubiquitination. E3 ubiquitin-protein ligase which catalyzes the formation of 'Lys-48'-polyubiquitin chains. Mediates the ubiquitination and subsequent degradation of phosphorylated Akt (AKT1, AKT2 and AKT3) in the nucleus. Acts as a terminal regulator of Akt signaling after activation; its phosphorylation by Akt, which is a prerequisite for ubiquitin ligase activity, suggests the existence of a regulation mechanism required to control Akt levels after activation. Positively regulates TGFB1-induced epithelial-mesenchymal transition and myofibroblast differentiation by mediating the ubiquitination and subsequent degradation of SMURF2. Regulates neuronal differentiation by regulating actin remodeling and Golgi organization via a signaling cascade involving RHOA, CIT and ROCK. Inhibits cell proliferation. This is E3 ubiquitin-protein ligase TTC3 from Rattus norvegicus (Rat).